The following is an 870-amino-acid chain: Ribonucleoside-diphosphate reductase large subunit (870 aa).

Positions 16 to 110 (MYVVKRDGTK…VSNLHKQTSK (95 aa)) constitute an ATP-cone domain. Residues 20-21 (KR), 26-32 (ENVSFDK), Thr71, and Asp75 each bind ATP. Position 235 (Ser235) interacts with GDP. Cys236 and Cys463 form a disulfide bridge. DTTP is bound by residues 244–246 (DSI), Lys261, Arg274, and 281–282 (RG). Asn446 provides a ligand contact to GDP. Asn446 acts as the Proton acceptor in catalysis. The active-site Cysteine radical intermediate is the Cys448. Residues Glu450 and 632-635 (TAST) contribute to the GDP site. Glu450 functions as the Proton acceptor in the catalytic mechanism. Residues 789-854 (KPVENNINST…NNNEDDLANY (66 aa)) form a disordered region. Over residues 796-811 (NSTTPLKTPTKTPNSS) the composition is skewed to low complexity. The segment covering 812-831 (NRISTSPTNNLTSPIRFNIT) has biased composition (polar residues). Residues 832–844 (QQQQQQQQQQQQQ) show a composition bias toward low complexity.

Belongs to the ribonucleoside diphosphate reductase large chain family. As to quaternary structure, heterodimer of a large and a small subunit.

It localises to the cytoplasm. The catalysed reaction is a 2'-deoxyribonucleoside 5'-diphosphate + [thioredoxin]-disulfide + H2O = a ribonucleoside 5'-diphosphate + [thioredoxin]-dithiol. With respect to regulation, under complex allosteric control mediated by deoxynucleoside triphosphates and ATP binding to separate specificity and activation sites on the large subunit. The type of nucleotide bound at the specificity site determines substrate preference. It seems probable that ATP makes the enzyme reduce CDP and UDP, dGTP favors ADP reduction and dTTP favors GDP reduction. Stimulated by ATP and inhibited by dATP binding to the activity site. In terms of biological role, provides the precursors necessary for DNA synthesis. Catalyzes the biosynthesis of deoxyribonucleotides from the corresponding ribonucleotides. The polypeptide is Ribonucleoside-diphosphate reductase large subunit (rnrA) (Dictyostelium discoideum (Social amoeba)).